A 100-amino-acid chain; its full sequence is Urease subunit gamma (100 aa).

The protein belongs to the urease gamma subunit family. As to quaternary structure, heterotrimer of UreA (gamma), UreB (beta) and UreC (alpha) subunits. Three heterotrimers associate to form the active enzyme.

It is found in the cytoplasm. The catalysed reaction is urea + 2 H2O + H(+) = hydrogencarbonate + 2 NH4(+). It participates in nitrogen metabolism; urea degradation; CO(2) and NH(3) from urea (urease route): step 1/1. The polypeptide is Urease subunit gamma (Photorhabdus laumondii subsp. laumondii (strain DSM 15139 / CIP 105565 / TT01) (Photorhabdus luminescens subsp. laumondii)).